The following is a 296-amino-acid chain: MDSALFKTIALIGKHKNPDIVIPLLSLAEYLTDRGISVVLDSLTAAHISNSRYPILTLEEIGKQADLAIVLGGDGTMLNIARALVPFSVPLIGINQGRLGFLTDLTADTMHETLNDMLAGQFVVENRMLLTVEVTRNGESVFKELAFNDVVLHRGISSGMIELEVHINGEYVYSLRSDGLIIATPTGSTAYALSSGGPILHPGLNLMTLVPICPHTLSNRPIVIGADATIEIKVHFTTEIKIYTDSHSWFDLSEHDRVFIQRCPETIKLLHPVHHSYYRMLREKLGWSGILQKNSR.

The active-site Proton acceptor is the D74. Residues 74–75 (DG), 148–149 (ND), R176, D178, and 189–194 (TAYALS) each bind NAD(+).

The protein belongs to the NAD kinase family. The cofactor is a divalent metal cation.

It is found in the cytoplasm. The enzyme catalyses NAD(+) + ATP = ADP + NADP(+) + H(+). Functionally, involved in the regulation of the intracellular balance of NAD and NADP, and is a key enzyme in the biosynthesis of NADP. Catalyzes specifically the phosphorylation on 2'-hydroxyl of the adenosine moiety of NAD to yield NADP. The sequence is that of NAD kinase from Nitrosomonas europaea (strain ATCC 19718 / CIP 103999 / KCTC 2705 / NBRC 14298).